Reading from the N-terminus, the 211-residue chain is Large ribosomal subunit protein bL25 (211 aa).

It belongs to the bacterial ribosomal protein bL25 family. CTC subfamily. As to quaternary structure, part of the 50S ribosomal subunit; part of the 5S rRNA/L5/L18/L25 subcomplex. Contacts the 5S rRNA. Binds to the 5S rRNA independently of L5 and L18.

This is one of the proteins that binds to the 5S RNA in the ribosome where it forms part of the central protuberance. The sequence is that of Large ribosomal subunit protein bL25 from Xanthomonas axonopodis pv. citri (strain 306).